The chain runs to 173 residues: uncharacterized protein (173 aa).

This sequence belongs to the M.jannaschii MJ0150/MJ0739/MJ0745/MJ1460/MJ1642 family.

This is an uncharacterized protein from Methanocaldococcus jannaschii (strain ATCC 43067 / DSM 2661 / JAL-1 / JCM 10045 / NBRC 100440) (Methanococcus jannaschii).